An 89-amino-acid polypeptide reads, in one-letter code: Large ribosomal subunit protein eL43 (89 aa).

The disordered stretch occupies residues 1–28 (MVKKSKVGSTGRFGARYGRKAKRTVKDI). The C4-type zinc-finger motif lies at 38–59 (CPKCDRPGVKRTHAGIWKCRKC).

It belongs to the eukaryotic ribosomal protein eL43 family. Zn(2+) serves as cofactor.

The sequence is that of Large ribosomal subunit protein eL43 from Methanosphaera stadtmanae (strain ATCC 43021 / DSM 3091 / JCM 11832 / MCB-3).